Reading from the N-terminus, the 105-residue chain is Met repressor (105 aa).

This sequence belongs to the MetJ family. Homodimer.

Its subcellular location is the cytoplasm. In terms of biological role, this regulatory protein, when combined with SAM (S-adenosylmethionine) represses the expression of the methionine regulon and of enzymes involved in SAM synthesis. The polypeptide is Met repressor (Salmonella dublin (strain CT_02021853)).